Consider the following 209-residue polypeptide: Fibroblast growth factor 10 (209 aa).

A signal peptide spans 1 to 36; sequence MWKWILTHCASAFPHLPGCCCCFLLLFLVSSFPVTC. 2 N-linked (GlcNAc...) asparagine glycosylation sites follow: N50 and N197.

The protein belongs to the heparin-binding growth factors family. Interacts with FGFR1 and FGFR2. Interacts with FGFBP1. Expressed abundantly in embryos and the lung, and at much lower levels in brain and heart.

The protein localises to the secreted. Functionally, plays an important role in the regulation of embryonic development, cell proliferation and cell differentiation. Required for normal branching morphogenesis. May play a role in wound healing. This is Fibroblast growth factor 10 (Fgf10) from Mus musculus (Mouse).